Reading from the N-terminus, the 236-residue chain is Orotidine 5'-phosphate decarboxylase (236 aa).

Substrate is bound by residues D11, K33, D60 to T69, T119, R181, Q190, G210, and R211. K62 functions as the Proton donor in the catalytic mechanism.

This sequence belongs to the OMP decarboxylase family. Type 1 subfamily. In terms of assembly, homodimer.

It carries out the reaction orotidine 5'-phosphate + H(+) = UMP + CO2. Its pathway is pyrimidine metabolism; UMP biosynthesis via de novo pathway; UMP from orotate: step 2/2. Catalyzes the decarboxylation of orotidine 5'-monophosphate (OMP) to uridine 5'-monophosphate (UMP). This Cutibacterium acnes (strain DSM 16379 / KPA171202) (Propionibacterium acnes) protein is Orotidine 5'-phosphate decarboxylase.